Here is a 169-residue protein sequence, read N- to C-terminus: Phosphopantetheine adenylyltransferase (169 aa).

Thr9 is a binding site for substrate. ATP contacts are provided by residues 9 to 10 and His17; that span reads TF. Lys41, Leu73, and Arg87 together coordinate substrate. ATP is bound by residues 88–90, Glu98, and 123–129; these read GLR and YQFISGT.

The protein belongs to the bacterial CoaD family. As to quaternary structure, homohexamer. Mg(2+) serves as cofactor.

It is found in the cytoplasm. It carries out the reaction (R)-4'-phosphopantetheine + ATP + H(+) = 3'-dephospho-CoA + diphosphate. The protein operates within cofactor biosynthesis; coenzyme A biosynthesis; CoA from (R)-pantothenate: step 4/5. In terms of biological role, reversibly transfers an adenylyl group from ATP to 4'-phosphopantetheine, yielding dephospho-CoA (dPCoA) and pyrophosphate. The protein is Phosphopantetheine adenylyltransferase of Bordetella bronchiseptica (strain ATCC BAA-588 / NCTC 13252 / RB50) (Alcaligenes bronchisepticus).